Consider the following 178-residue polypeptide: Cytochrome b6-f complex iron-sulfur subunit (178 aa).

A helical transmembrane segment spans residues 20–42 (LLTFGSVTGVALGALYPVANYFI). The Rieske domain maps to 65-161 (ASGWLSSHPE…VSVENDNVFV (97 aa)). Positions 107, 109, 125, and 128 each coordinate [2Fe-2S] cluster. Cysteine 112 and cysteine 127 form a disulfide bridge.

The protein belongs to the Rieske iron-sulfur protein family. As to quaternary structure, the 4 large subunits of the cytochrome b6-f complex are cytochrome b6, subunit IV (17 kDa polypeptide, PetD), cytochrome f and the Rieske protein, while the 4 small subunits are PetG, PetL, PetM and PetN. The complex functions as a dimer. [2Fe-2S] cluster is required as a cofactor.

Its subcellular location is the cellular thylakoid membrane. It catalyses the reaction 2 oxidized [plastocyanin] + a plastoquinol + 2 H(+)(in) = 2 reduced [plastocyanin] + a plastoquinone + 4 H(+)(out). Its function is as follows. Component of the cytochrome b6-f complex, which mediates electron transfer between photosystem II (PSII) and photosystem I (PSI), cyclic electron flow around PSI, and state transitions. The chain is Cytochrome b6-f complex iron-sulfur subunit from Synechococcus sp. (strain CC9605).